Here is a 384-residue protein sequence, read N- to C-terminus: Outer membrane protein assembly factor BamB (384 aa).

Positions 1–16 (MKIRILVLILCALTQG) are cleaved as a signal peptide. Cys-17 carries the N-palmitoyl cysteine lipid modification. Cys-17 carries the S-diacylglycerol cysteine lipid modification.

This sequence belongs to the BamB family. Part of the Bam complex.

The protein localises to the cell outer membrane. Its function is as follows. Part of the outer membrane protein assembly complex, which is involved in assembly and insertion of beta-barrel proteins into the outer membrane. This is Outer membrane protein assembly factor BamB from Legionella pneumophila (strain Paris).